The following is a 493-amino-acid chain: Guanosine-5'-triphosphate,3'-diphosphate pyrophosphatase (493 aa).

It belongs to the GppA/Ppx family. GppA subfamily.

The enzyme catalyses guanosine 3'-diphosphate 5'-triphosphate + H2O = guanosine 3',5'-bis(diphosphate) + phosphate + H(+). It functions in the pathway purine metabolism; ppGpp biosynthesis; ppGpp from GTP: step 2/2. Catalyzes the conversion of pppGpp to ppGpp. Guanosine pentaphosphate (pppGpp) is a cytoplasmic signaling molecule which together with ppGpp controls the 'stringent response', an adaptive process that allows bacteria to respond to amino acid starvation, resulting in the coordinated regulation of numerous cellular activities. The polypeptide is Guanosine-5'-triphosphate,3'-diphosphate pyrophosphatase (Salmonella gallinarum (strain 287/91 / NCTC 13346)).